Here is a 417-residue protein sequence, read N- to C-terminus: RH-like protein IC (417 aa).

The next 11 helical transmembrane spans lie at 12–32 (CLPL…YFFT), 44–64 (LVAS…GFGF), 77–97 (VAFN…LDGF), 125–145 (ISAG…MVLV), 172–192 (FYVF…KPLP), 203–223 (TIPS…WPSF), 238–258 (VFNT…VSSL), 265–285 (INMT…GTSC), 287–307 (LITS…ISIG), 331–351 (NFSL…VLHT), and 358–378 (MVGF…AIAV).

Belongs to the ammonium transporter (TC 2.A.49) family. Rh subfamily.

It is found in the membrane. May be part of an oligomeric complex which is likely to have a transport or channel function in the erythrocyte membrane. This is RH-like protein IC from Gorilla gorilla gorilla (Western lowland gorilla).